The sequence spans 97 residues: Peptide YY (97 aa).

The signal sequence occupies residues 1 to 28 (MMSGRRSWPAMATVLLTLLVCLGELVDA). Position 41 is a phosphoserine (S41). F64 bears the Phenylalanine amide mark. Residues 68-97 (DFSEALLSILLFPDREDPPVKSRPEGAYLW) constitute a propeptide that is removed on maturation.

It belongs to the NPY family.

It is found in the secreted. In terms of biological role, this gut peptide inhibits exocrine pancreatic secretion, has a vasoconstrictory action and inhibitis jejunal and colonic mobility. The sequence is that of Peptide YY (PYY) from Bos taurus (Bovine).